A 449-amino-acid polypeptide reads, in one-letter code: Elongation factor 1-alpha (449 aa).

One can recognise a tr-type G domain in the interval 5-230; that stretch reads KVHINIVVIG…DQINEPKRPS (226 aa). The tract at residues 14-21 is G1; that stretch reads GHVDSGKS. Residue 14–21 participates in GTP binding; sequence GHVDSGKS. The residue at position 55 (lysine 55) is an N6,N6-dimethyllysine. The G2 stretch occupies residues 70–74; sequence GITID. Residue lysine 79 is modified to N6,N6,N6-trimethyllysine. Residues 91–94 form a G3 region; it reads DAPG. GTP is bound by residues 91–95 and 153–156; these read DAPGH and NKMD. A G4 region spans residues 153–156; it reads NKMD. Lysine 187 bears the N6,N6,N6-trimethyllysine mark. Residues 194-196 are G5; the sequence is SGF. Residue lysine 261 is modified to N6-methyllysine. Glutamate 289 carries the post-translational modification 5-glutamyl glycerylphosphorylethanolamine. Lysine 306 is subject to N6,N6,N6-trimethyllysine. Glutamate 362 is subject to 5-glutamyl glycerylphosphorylethanolamine. Lysine 396 carries the post-translational modification N6,N6,N6-trimethyllysine.

It belongs to the TRAFAC class translation factor GTPase superfamily. Classic translation factor GTPase family. EF-Tu/EF-1A subfamily.

Its subcellular location is the cytoplasm. Functionally, this protein promotes the GTP-dependent binding of aminoacyl-tRNA to the A-site of ribosomes during protein biosynthesis. In Daucus carota (Wild carrot), this protein is Elongation factor 1-alpha.